A 245-amino-acid chain; its full sequence is tRNA (guanine-N(1)-)-methyltransferase (245 aa).

S-adenosyl-L-methionine-binding positions include glycine 112 and 132–137 (IGDFVL).

The protein belongs to the RNA methyltransferase TrmD family. In terms of assembly, homodimer.

It is found in the cytoplasm. It carries out the reaction guanosine(37) in tRNA + S-adenosyl-L-methionine = N(1)-methylguanosine(37) in tRNA + S-adenosyl-L-homocysteine + H(+). Specifically methylates guanosine-37 in various tRNAs. The protein is tRNA (guanine-N(1)-)-methyltransferase of Geobacter metallireducens (strain ATCC 53774 / DSM 7210 / GS-15).